Consider the following 430-residue polypeptide: UDP-N-acetylglucosamine 1-carboxyvinyltransferase 1 (430 aa).

22 to 23 is a phosphoenolpyruvate binding site; sequence KN. R93 provides a ligand contact to UDP-N-acetyl-alpha-D-glucosamine. Catalysis depends on C117, which acts as the Proton donor. C117 is subject to 2-(S-cysteinyl)pyruvic acid O-phosphothioketal. Residues 122–126, D305, and V327 contribute to the UDP-N-acetyl-alpha-D-glucosamine site; that span reads RPVDL.

This sequence belongs to the EPSP synthase family. MurA subfamily.

The protein localises to the cytoplasm. The enzyme catalyses phosphoenolpyruvate + UDP-N-acetyl-alpha-D-glucosamine = UDP-N-acetyl-3-O-(1-carboxyvinyl)-alpha-D-glucosamine + phosphate. It functions in the pathway cell wall biogenesis; peptidoglycan biosynthesis. Its function is as follows. Cell wall formation. Adds enolpyruvyl to UDP-N-acetylglucosamine. In Listeria innocua serovar 6a (strain ATCC BAA-680 / CLIP 11262), this protein is UDP-N-acetylglucosamine 1-carboxyvinyltransferase 1.